Here is a 490-residue protein sequence, read N- to C-terminus: ATP synthase subunit beta, chloroplastic (490 aa).

170–177 (GGAGVGKT) lines the ATP pocket.

It belongs to the ATPase alpha/beta chains family. In terms of assembly, F-type ATPases have 2 components, CF(1) - the catalytic core - and CF(0) - the membrane proton channel. CF(1) has five subunits: alpha(3), beta(3), gamma(1), delta(1), epsilon(1). CF(0) has four main subunits: a(1), b(1), b'(1) and c(9-12).

It is found in the plastid. Its subcellular location is the chloroplast thylakoid membrane. The catalysed reaction is ATP + H2O + 4 H(+)(in) = ADP + phosphate + 5 H(+)(out). In terms of biological role, produces ATP from ADP in the presence of a proton gradient across the membrane. The catalytic sites are hosted primarily by the beta subunits. In Ipomoea setosa (Brazilian morning glory), this protein is ATP synthase subunit beta, chloroplastic.